A 171-amino-acid polypeptide reads, in one-letter code: UPF0398 protein stu0232 (171 aa).

It belongs to the UPF0398 family.

In Streptococcus thermophilus (strain ATCC BAA-250 / LMG 18311), this protein is UPF0398 protein stu0232.